We begin with the raw amino-acid sequence, 264 residues long: Acyl-[acyl-carrier-protein]--UDP-N-acetylglucosamine O-acyltransferase (264 aa).

Belongs to the transferase hexapeptide repeat family. LpxA subfamily. Homotrimer.

It is found in the cytoplasm. It catalyses the reaction a (3R)-hydroxyacyl-[ACP] + UDP-N-acetyl-alpha-D-glucosamine = a UDP-3-O-[(3R)-3-hydroxyacyl]-N-acetyl-alpha-D-glucosamine + holo-[ACP]. The protein operates within glycolipid biosynthesis; lipid IV(A) biosynthesis; lipid IV(A) from (3R)-3-hydroxytetradecanoyl-[acyl-carrier-protein] and UDP-N-acetyl-alpha-D-glucosamine: step 1/6. Functionally, involved in the biosynthesis of lipid A, a phosphorylated glycolipid that anchors the lipopolysaccharide to the outer membrane of the cell. This chain is Acyl-[acyl-carrier-protein]--UDP-N-acetylglucosamine O-acyltransferase, found in Rickettsia africae (strain ESF-5).